We begin with the raw amino-acid sequence, 147 residues long: Ponticulin-like protein C4 (147 aa).

Positions Met1–Ala20 are cleaved as a signal peptide. The GPI-like-anchor amidated asparagine moiety is linked to residue Asn118. An N-linked (GlcNAc...) asparagine glycan is attached at Asn118. The propeptide at Ser119–Leu147 is removed in mature form.

The protein belongs to the ponticulin family. Post-translationally, the GPI-like-anchor contains a phosphoceramide group, rather than a phosphatidyl group.

Its subcellular location is the cell membrane. The chain is Ponticulin-like protein C4 (ponC4) from Dictyostelium discoideum (Social amoeba).